The primary structure comprises 236 residues: Cytochrome c biogenesis ATP-binding export protein CcmA (236 aa).

Residues 14-235 (LEATGLQVAR…SAGDRVTGTE (222 aa)) enclose the ABC transporter domain. An ATP-binding site is contributed by 46–53 (GANGSGKT).

It belongs to the ABC transporter superfamily. CcmA exporter (TC 3.A.1.107) family. The complex is composed of two ATP-binding proteins (CcmA) and two transmembrane proteins (CcmB).

Its subcellular location is the cell inner membrane. The catalysed reaction is heme b(in) + ATP + H2O = heme b(out) + ADP + phosphate + H(+). Functionally, part of the ABC transporter complex CcmAB involved in the biogenesis of c-type cytochromes; once thought to export heme, this seems not to be the case, but its exact role is uncertain. Responsible for energy coupling to the transport system. The chain is Cytochrome c biogenesis ATP-binding export protein CcmA from Alkalilimnicola ehrlichii (strain ATCC BAA-1101 / DSM 17681 / MLHE-1).